The chain runs to 196 residues: Large ribosomal subunit protein bL25 (196 aa).

The protein belongs to the bacterial ribosomal protein bL25 family. CTC subfamily. Part of the 50S ribosomal subunit; part of the 5S rRNA/L5/L18/L25 subcomplex. Contacts the 5S rRNA. Binds to the 5S rRNA independently of L5 and L18.

Functionally, this is one of the proteins that binds to the 5S RNA in the ribosome where it forms part of the central protuberance. The polypeptide is Large ribosomal subunit protein bL25 (Treponema pallidum subsp. pallidum (strain SS14)).